We begin with the raw amino-acid sequence, 103 residues long: Putative truncated guanine nucleotide exchange factor YLL017W (103 aa).

Residues 26–97 (QPIDVVECTY…PPSFYTVHSK (72 aa)) form the SH3 domain.

The polypeptide is Putative truncated guanine nucleotide exchange factor YLL017W (Saccharomyces cerevisiae (strain ATCC 204508 / S288c) (Baker's yeast)).